A 349-amino-acid polypeptide reads, in one-letter code: MNKVVVGLSGGVDSSVAAAVLHHQGYEVIGLTLWLMKGKGQCCSEGMVDAAFICEQLGIPHHIVDSRDVFQANIVNYLVSGYEAGITPLPCSQCNRAVKFGPMLNYARQELGCDRIATGHYARIRYDEISQRYQLLRAIDRNKDQSYFLYDLSQEMLAGTVFPLGDQTKEDTRRIAAEFDLKTASKPESQDLCLIEAHGSMKTFLDQYIHQKEGDIVDLEGKVLGKHQGIHHYTIGQRKGLGVAAPEPLYVVKLDPIMNQVIVANRANAGRSDCTVTRLNWVSIAAPSTPIRVETQIRYRSSAVPVDLIPLEDNRVKLVFDEPEFGITPGQAAVFYDGEILLGGGIIEL.

ATP-binding positions include 7 to 14 (GLSGGVDS) and Leu33. Cys94 serves as the catalytic Nucleophile. Cys94 and Cys193 form a disulfide bridge. Gly119 lines the ATP pocket. The tract at residues 143–145 (KDQ) is interaction with tRNA. Cys193 acts as the Cysteine persulfide intermediate in catalysis. The segment at 298–299 (RY) is interaction with tRNA.

Belongs to the MnmA/TRMU family.

Its subcellular location is the cytoplasm. It carries out the reaction S-sulfanyl-L-cysteinyl-[protein] + uridine(34) in tRNA + AH2 + ATP = 2-thiouridine(34) in tRNA + L-cysteinyl-[protein] + A + AMP + diphosphate + H(+). Functionally, catalyzes the 2-thiolation of uridine at the wobble position (U34) of tRNA, leading to the formation of s(2)U34. The chain is tRNA-specific 2-thiouridylase MnmA from Rippkaea orientalis (strain PCC 8801 / RF-1) (Cyanothece sp. (strain PCC 8801)).